We begin with the raw amino-acid sequence, 160 residues long: Cyclic pyranopterin monophosphate synthase (160 aa).

Substrate is bound by residues 77 to 79 (MCH) and 114 to 115 (ME). Residue Asp-129 is part of the active site.

The protein belongs to the MoaC family. In terms of assembly, homohexamer; trimer of dimers.

It carries out the reaction (8S)-3',8-cyclo-7,8-dihydroguanosine 5'-triphosphate = cyclic pyranopterin phosphate + diphosphate. It functions in the pathway cofactor biosynthesis; molybdopterin biosynthesis. Catalyzes the conversion of (8S)-3',8-cyclo-7,8-dihydroguanosine 5'-triphosphate to cyclic pyranopterin monophosphate (cPMP). The protein is Cyclic pyranopterin monophosphate synthase of Listeria monocytogenes serovar 1/2a (strain ATCC BAA-679 / EGD-e).